Here is a 366-residue protein sequence, read N- to C-terminus: Alanine racemase (366 aa).

Catalysis depends on Lys40, which acts as the Proton acceptor; specific for D-alanine. Lys40 carries the N6-(pyridoxal phosphate)lysine modification. Arg136 is a substrate binding site. Residue Tyr263 is the Proton acceptor; specific for L-alanine of the active site. Substrate is bound at residue Met310.

It belongs to the alanine racemase family. The cofactor is pyridoxal 5'-phosphate.

The catalysed reaction is L-alanine = D-alanine. It functions in the pathway amino-acid biosynthesis; D-alanine biosynthesis; D-alanine from L-alanine: step 1/1. Catalyzes the interconversion of L-alanine and D-alanine. May also act on other amino acids. In Streptococcus pyogenes serotype M12 (strain MGAS2096), this protein is Alanine racemase (alr).